Consider the following 886-residue polypeptide: Alanine--tRNA ligase (886 aa).

The Zn(2+) site is built by His-564, His-568, Cys-666, and His-670.

Belongs to the class-II aminoacyl-tRNA synthetase family. It depends on Zn(2+) as a cofactor.

The protein resides in the cytoplasm. The catalysed reaction is tRNA(Ala) + L-alanine + ATP = L-alanyl-tRNA(Ala) + AMP + diphosphate. Functionally, catalyzes the attachment of alanine to tRNA(Ala) in a two-step reaction: alanine is first activated by ATP to form Ala-AMP and then transferred to the acceptor end of tRNA(Ala). Also edits incorrectly charged Ser-tRNA(Ala) and Gly-tRNA(Ala) via its editing domain. This chain is Alanine--tRNA ligase, found in Prochlorococcus marinus subsp. pastoris (strain CCMP1986 / NIES-2087 / MED4).